Reading from the N-terminus, the 381-residue chain is Cytosolic acyl coenzyme A thioester hydrolase (381 aa).

The HotDog ACOT-type 1 domain maps to 51–169 (LGHCVTMGRI…TLWYVPLSLK (119 aa)). N67 is an active-site residue. N6-acetyllysine is present on residues K169 and K199. Positions 225–339 (SYSQSSLIHL…FFTYVSLNQE (115 aa)) constitute a HotDog ACOT-type 2 domain. D256 is a catalytic residue. An N6-acetyllysine modification is found at K284. Residues 342–381 (PMPVPQLVPETEDEKKRFEEGKGRYLQMKAKRQGHTEPQP) are disordered. Over residues 354 to 364 (DEKKRFEEGKG) the composition is skewed to basic and acidic residues.

In terms of assembly, homohexamer. As to expression, widely expressed with highest levels in brain. High levels also found in thymus, large intestine and testis. Negligible in muscle and adipose tissue. In the central and peripheral nervous systems, displays a predominantly neuronal localization with highest expression in cell bodies and neurites.

Its subcellular location is the cytoplasm. It is found in the cytosol. It catalyses the reaction hexadecanoyl-CoA + H2O = hexadecanoate + CoA + H(+). The catalysed reaction is dodecanoyl-CoA + H2O = dodecanoate + CoA + H(+). The enzyme catalyses tetradecanoyl-CoA + H2O = tetradecanoate + CoA + H(+). It carries out the reaction decanoyl-CoA + H2O = decanoate + CoA + H(+). It catalyses the reaction octanoyl-CoA + H2O = octanoate + CoA + H(+). The catalysed reaction is octadecanoyl-CoA + H2O = octadecanoate + CoA + H(+). The enzyme catalyses (9Z)-octadecenoyl-CoA + H2O = (9Z)-octadecenoate + CoA + H(+). It participates in lipid metabolism; fatty acid metabolism. Catalyzes the hydrolysis of acyl-CoAs into free fatty acids and coenzyme A (CoASH), regulating their respective intracellular levels. Preferentially hydrolyzes palmitoyl-CoA, but has a broad specificity acting on other fatty acyl-CoAs with chain-lengths of C8-C18. May play an important physiological function in brain. The polypeptide is Cytosolic acyl coenzyme A thioester hydrolase (Acot7) (Mus musculus (Mouse)).